We begin with the raw amino-acid sequence, 488 residues long: Serine protease HTR4 (488 aa).

Residues 1–35 form the signal peptide; sequence MSRSKMSSQRLWAVRAQFLLLWLLLWAAPVPWAEA. An IGFBP N-terminal domain is found at 40–118; sequence VSLPCPDACD…RAWLGTCGCA (79 aa). 6 cysteine pairs are disulfide-bonded: C44–C70, C48–C72, C53–C73, C59–C76, C84–C98, and C92–C115. A serine protease region spans residues 213 to 373; that stretch reads GSGFIVSEDG…IPSDRIRQFL (161 aa). Active-site charge relay system residues include H229, D259, and S337. Residues 384 to 476 enclose the PDZ domain; sequence KAPLQKKYLG…LSIIVLRGSQ (93 aa).

Belongs to the peptidase S1C family.

Its subcellular location is the secreted. Serine protease. The chain is Serine protease HTR4 (Htra4) from Rattus norvegicus (Rat).